Here is a 398-residue protein sequence, read N- to C-terminus: Interleukin-1 receptor type 2 (398 aa).

The signal sequence occupies residues 1 to 13 (MLRLYVLVMGVSA). At 14-343 (FTLQPAAHTG…FQTLRTTVKE (330 aa)) the chain is on the extracellular side. Ig-like C2-type domains lie at 18 to 124 (PAAH…IELR), 134 to 223 (PFIS…ITRS), and 237 to 349 (PVII…STFS). Disulfide bonds link C28–C116, C50–C108, and C152–C207. N-linked (GlcNAc...) asparagine glycosylation is found at N66, N72, and N112. N-linked (GlcNAc...) asparagine glycans are attached at residues N219 and N277. A disulfide bridge links C258 with C326. The segment at 329-343 (HNTLSFQTLRTTVKE) is contains proteolytic cleavage site. Residues 344-369 (ASSTFSWGIVLAPLSLAFLVLGGIWM) traverse the membrane as a helical segment. Residues 370 to 398 (HRRCKHRTGKADGLTVLWPHHQDFQSYPK) lie on the Cytoplasmic side of the membrane.

Belongs to the interleukin-1 receptor family. As to quaternary structure, associates with IL1RAP to form a non-signaling interleukin-1 receptor complex. Post-translationally, a soluble form (sIL1R2) can also be produced by proteolytic cleavage at the cell surface (shedding) involving a metalloproteinase; hovever, several sIL1R2 forms ranging from 45 and 60 kDa are reported.

The protein localises to the secreted. Its subcellular location is the cell membrane. Functionally, non-signaling receptor for IL1A, IL1B and IL1RN. Reduces IL1B activities. Serves as a decoy receptor by competitive binding to IL1B and preventing its binding to IL1R1. Also modulates cellular response through non-signaling association with IL1RAP after binding to IL1B. IL1R2 (membrane and secreted forms) preferentially binds IL1B and poorly IL1A and IL1RN. The secreted IL1R2 recruits secreted IL1RAP with high affinity; this complex formation may be the dominant mechanism for neutralization of IL1B by secreted/soluble receptors. The sequence is that of Interleukin-1 receptor type 2 (IL1R2) from Homo sapiens (Human).